The chain runs to 216 residues: MKWSEVFHDITTRHDFQAMHDFLEKEYTTQTVYPDKQNIYQAFDLTPFEDIKVVILGQDPYHGPNQAHGLAFSVQPHAKFPPSLRNMYQELENDIGCHRTSPHLQDWAREGVLLLNTVLTVRQGEAHSHRNIGWETFTDEIIQAVSNYREHVVFILWGRPAQQKERFIDTSKHLIIKSPHPSPLSAFRGFFGSKPYSTTNNYLKSKGKTPVQWCES.

Asp59 acts as the Proton acceptor in catalysis.

This sequence belongs to the uracil-DNA glycosylase (UDG) superfamily. UNG family.

Its subcellular location is the cytoplasm. It catalyses the reaction Hydrolyzes single-stranded DNA or mismatched double-stranded DNA and polynucleotides, releasing free uracil.. In terms of biological role, excises uracil residues from the DNA which can arise as a result of misincorporation of dUMP residues by DNA polymerase or due to deamination of cytosine. The sequence is that of Uracil-DNA glycosylase from Staphylococcus epidermidis (strain ATCC 12228 / FDA PCI 1200).